We begin with the raw amino-acid sequence, 224 residues long: Large ribosomal subunit protein uL3 (224 aa).

Gln-159 carries the post-translational modification N5-methylglutamine.

It belongs to the universal ribosomal protein uL3 family. Part of the 50S ribosomal subunit. Forms a cluster with proteins L14 and L19. Post-translationally, methylated by PrmB.

In terms of biological role, one of the primary rRNA binding proteins, it binds directly near the 3'-end of the 23S rRNA, where it nucleates assembly of the 50S subunit. This Janthinobacterium sp. (strain Marseille) (Minibacterium massiliensis) protein is Large ribosomal subunit protein uL3.